The primary structure comprises 143 residues: Ribosome maturation factor RimP (143 aa).

The protein belongs to the RimP family.

Its subcellular location is the cytoplasm. In terms of biological role, required for maturation of 30S ribosomal subunits. This is Ribosome maturation factor RimP from Nitrosomonas eutropha (strain DSM 101675 / C91 / Nm57).